Consider the following 250-residue polypeptide: MTDILIDDTATEAVRTLIRAFPLVPVSQPPEQGSYLLAEHDTVSLRLVGEKSNVIVDFTSGAAQYRRTKGGGELIAKAVNHTAHPTVWDATAGLGRDSFVLASLGLTVTAFEQHPAVACLLSDGIRRALLNPETQDTAARINLHFGNAAEQMPALVKTQGKPDIVYLDPMYPERRKSAAVKKEMAYFHRLVGEAQDEVVLLHTARQTAKKRVVVKRPRLGEHLAGQAPAYQYTGKSTRFDVYLPYGADKG.

S-adenosyl-L-methionine contacts are provided by residues 96 to 97 and Asp-168; that span reads RD.

Belongs to the methyltransferase superfamily. RsmJ family.

Its subcellular location is the cytoplasm. It carries out the reaction guanosine(1516) in 16S rRNA + S-adenosyl-L-methionine = N(2)-methylguanosine(1516) in 16S rRNA + S-adenosyl-L-homocysteine + H(+). Its function is as follows. Specifically methylates the guanosine in position 1516 of 16S rRNA. This Neisseria gonorrhoeae (strain ATCC 700825 / FA 1090) protein is Ribosomal RNA small subunit methyltransferase J.